The chain runs to 850 residues: Protein SEY1 (850 aa).

A disordered region spans residues 1–27 (MSDLPPPDLGSEEISVSPTSSSSSFVP). Over 1 to 741 (MSDLPPPDLG…KRALIQHVTH (741 aa)) the chain is Cytoplasmic. The span at 12–27 (EEISVSPTSSSSSFVP) shows a compositional bias: low complexity. Residues 64–297 (NNNYHIVSVF…NEDFLFKKYY (234 aa)) enclose the GB1/RHD3-type G domain. 74–81 (GSQSTGKS) contributes to the GTP binding site. Residues 742–762 (IPYYIYIVILVLGWNEFMAVL) traverse the membrane as a helical segment. Over 763–765 (RNP) the chain is Lumenal. A helical transmembrane segment spans residues 766–786 (FFFTLLLMLGAGTYVLYHLNL). At 787–850 (LKPAMVVVQR…SDLTPPGEGS (64 aa)) the chain is on the cytoplasmic side. Residues 816–850 (QPQEHAKRLSKMAGITEDKPEEIEMSDLTPPGEGS) are disordered.

The protein belongs to the TRAFAC class dynamin-like GTPase superfamily. GB1/RHD3 GTPase family. RHD3 subfamily.

It is found in the endoplasmic reticulum membrane. Cooperates with the reticulon proteins and tubule-shaping DP1 family proteins to generate and maintain the structure of the tubular endoplasmic reticulum network. Has GTPase activity, which is required for its function in ER organization. The chain is Protein SEY1 from Meyerozyma guilliermondii (strain ATCC 6260 / CBS 566 / DSM 6381 / JCM 1539 / NBRC 10279 / NRRL Y-324) (Yeast).